We begin with the raw amino-acid sequence, 274 residues long: Large ribosomal subunit protein uL2cz/uL2cy (274 aa).

Disordered stretches follow at residues 1–21 (MAIHLYKTSTPGTRNGAVDSQ) and 225–274 (PVDH…RRSK).

It belongs to the universal ribosomal protein uL2 family. As to quaternary structure, part of the 50S ribosomal subunit.

The protein resides in the plastid. It localises to the chloroplast. This is Large ribosomal subunit protein uL2cz/uL2cy (rpl2-A) from Gossypium barbadense (Sea Island cotton).